The primary structure comprises 101 residues: Small ribosomal subunit protein uS14 (101 aa).

This sequence belongs to the universal ribosomal protein uS14 family. Part of the 30S ribosomal subunit. Contacts proteins S3 and S10.

In terms of biological role, binds 16S rRNA, required for the assembly of 30S particles and may also be responsible for determining the conformation of the 16S rRNA at the A site. The sequence is that of Small ribosomal subunit protein uS14 from Burkholderia vietnamiensis (strain G4 / LMG 22486) (Burkholderia cepacia (strain R1808)).